A 526-amino-acid polypeptide reads, in one-letter code: CTP synthase (526 aa).

The segment at 1 to 270 (MKYIFVTGGV…ADVLSTHLGL (270 aa)) is amidoligase domain. Ser-12 is a binding site for CTP. Ser-12 is a UTP binding site. ATP-binding positions include 13-18 (GLGKGI) and Asp-70. The Mg(2+) site is built by Asp-70 and Glu-145. Residues 152 to 154 (DIE), 191 to 196 (KTKPTQ), and Lys-227 each bind CTP. UTP contacts are provided by residues 191 to 196 (KTKPTQ) and Lys-227. The Glutamine amidotransferase type-1 domain occupies 293–525 (VAIVSKYGIE…VEACRANKRT (233 aa)). Position 349 (Gly-349) interacts with L-glutamine. Catalysis depends on Cys-376, which acts as the Nucleophile; for glutamine hydrolysis. L-glutamine-binding positions include 377–380 (LGFQ), Glu-400, and Arg-455. Residues His-498 and Glu-500 contribute to the active site.

The protein belongs to the CTP synthase family. Homotetramer.

It carries out the reaction UTP + L-glutamine + ATP + H2O = CTP + L-glutamate + ADP + phosphate + 2 H(+). The enzyme catalyses L-glutamine + H2O = L-glutamate + NH4(+). The catalysed reaction is UTP + NH4(+) + ATP = CTP + ADP + phosphate + 2 H(+). It participates in pyrimidine metabolism; CTP biosynthesis via de novo pathway; CTP from UDP: step 2/2. Its activity is regulated as follows. Allosterically activated by GTP, when glutamine is the substrate; GTP has no effect on the reaction when ammonia is the substrate. The allosteric effector GTP functions by stabilizing the protein conformation that binds the tetrahedral intermediate(s) formed during glutamine hydrolysis. Inhibited by the product CTP, via allosteric rather than competitive inhibition. In terms of biological role, catalyzes the ATP-dependent amination of UTP to CTP with either L-glutamine or ammonia as the source of nitrogen. Regulates intracellular CTP levels through interactions with the four ribonucleotide triphosphates. The sequence is that of CTP synthase from Methanoregula boonei (strain DSM 21154 / JCM 14090 / 6A8).